Here is a 364-residue protein sequence, read N- to C-terminus: UDP-N-acetylglucosamine--N-acetylmuramyl-(pentapeptide) pyrophosphoryl-undecaprenol N-acetylglucosamine transferase (364 aa).

UDP-N-acetyl-alpha-D-glucosamine contacts are provided by residues 15–17, Asn123, Arg164, Ser191, and Gln286; that span reads TGG.

This sequence belongs to the glycosyltransferase 28 family. MurG subfamily.

The protein resides in the cell inner membrane. The enzyme catalyses di-trans,octa-cis-undecaprenyl diphospho-N-acetyl-alpha-D-muramoyl-L-alanyl-D-glutamyl-meso-2,6-diaminopimeloyl-D-alanyl-D-alanine + UDP-N-acetyl-alpha-D-glucosamine = di-trans,octa-cis-undecaprenyl diphospho-[N-acetyl-alpha-D-glucosaminyl-(1-&gt;4)]-N-acetyl-alpha-D-muramoyl-L-alanyl-D-glutamyl-meso-2,6-diaminopimeloyl-D-alanyl-D-alanine + UDP + H(+). It functions in the pathway cell wall biogenesis; peptidoglycan biosynthesis. Its function is as follows. Cell wall formation. Catalyzes the transfer of a GlcNAc subunit on undecaprenyl-pyrophosphoryl-MurNAc-pentapeptide (lipid intermediate I) to form undecaprenyl-pyrophosphoryl-MurNAc-(pentapeptide)GlcNAc (lipid intermediate II). This chain is UDP-N-acetylglucosamine--N-acetylmuramyl-(pentapeptide) pyrophosphoryl-undecaprenol N-acetylglucosamine transferase, found in Prochlorococcus marinus (strain MIT 9515).